Reading from the N-terminus, the 834-residue chain is Periplasmic nitrate reductase (834 aa).

Residues 1–29 constitute a signal peptide (tat-type signal); that stretch reads MKLSRREFAKANAAAIAAAAAGLPLASTA. A 4Fe-4S Mo/W bis-MGD-type domain is found at 41-97; sequence LDWNKAPCRFCGTGCSVMVATRDNRVVATHGDVKAEVNRGLNCVKGYFLSKIMYGVD. 4 residues coordinate [4Fe-4S] cluster: Cys48, Cys51, Cys55, and Cys83. Mo-bis(molybdopterin guanine dinucleotide) contacts are provided by residues Lys85, Gln152, Asn177, Cys181, 214–221, 245–249, 264–266, Met375, Gln379, Asn485, 511–512, Lys534, Asp561, and 721–730; these read WGSNMAEM, STFEH, QTD, SD, and TGRVLEHWHT. Phe797 contributes to the substrate binding site. Mo-bis(molybdopterin guanine dinucleotide)-binding residues include Asn805 and Lys822.

Belongs to the prokaryotic molybdopterin-containing oxidoreductase family. NasA/NapA/NarB subfamily. Component of the periplasmic nitrate reductase NapAB complex composed of NapA and NapB. It depends on [4Fe-4S] cluster as a cofactor. Requires Mo-bis(molybdopterin guanine dinucleotide) as cofactor. Predicted to be exported by the Tat system. The position of the signal peptide cleavage has not been experimentally proven.

It localises to the periplasm. The enzyme catalyses 2 Fe(II)-[cytochrome] + nitrate + 2 H(+) = 2 Fe(III)-[cytochrome] + nitrite + H2O. In terms of biological role, catalytic subunit of the periplasmic nitrate reductase complex NapAB. Receives electrons from NapB and catalyzes the reduction of nitrate to nitrite. This Ectopseudomonas mendocina (strain ymp) (Pseudomonas mendocina) protein is Periplasmic nitrate reductase.